The sequence spans 340 residues: tRNA N6-adenosine threonylcarbamoyltransferase (340 aa).

Histidine 111 and histidine 115 together coordinate Fe cation. Substrate contacts are provided by residues 134–138 (LVSGG), aspartate 167, glycine 180, and asparagine 276. Aspartate 304 provides a ligand contact to Fe cation.

This sequence belongs to the KAE1 / TsaD family. Requires Fe(2+) as cofactor.

The protein localises to the cytoplasm. The catalysed reaction is L-threonylcarbamoyladenylate + adenosine(37) in tRNA = N(6)-L-threonylcarbamoyladenosine(37) in tRNA + AMP + H(+). Required for the formation of a threonylcarbamoyl group on adenosine at position 37 (t(6)A37) in tRNAs that read codons beginning with adenine. Is involved in the transfer of the threonylcarbamoyl moiety of threonylcarbamoyl-AMP (TC-AMP) to the N6 group of A37, together with TsaE and TsaB. TsaD likely plays a direct catalytic role in this reaction. In Helicobacter pylori (strain J99 / ATCC 700824) (Campylobacter pylori J99), this protein is tRNA N6-adenosine threonylcarbamoyltransferase.